The sequence spans 144 residues: Large ribosomal subunit protein uL11 (144 aa).

It belongs to the universal ribosomal protein uL11 family. In terms of assembly, part of the ribosomal stalk of the 50S ribosomal subunit. Interacts with L10 and the large rRNA to form the base of the stalk. L10 forms an elongated spine to which L12 dimers bind in a sequential fashion forming a multimeric L10(L12)X complex. One or more lysine residues are methylated.

Functionally, forms part of the ribosomal stalk which helps the ribosome interact with GTP-bound translation factors. The protein is Large ribosomal subunit protein uL11 of Corynebacterium glutamicum (strain R).